We begin with the raw amino-acid sequence, 790 residues long: GATOR2 complex protein WDR24 (790 aa).

6 WD repeats span residues 72–112, 118–158, 161–201, 205–245, 249–291, and 295–338; these read SLNL…RNKQ, EHKR…SVST, GQSE…RCER, AHNG…AKEM, QTIA…VPAA, and EHRD…VERA. S155 carries the phosphoserine; by AMPK modification. Phosphoserine is present on residues S470 and S496. T581 carries the post-translational modification Phosphothreonine. Phosphoserine occurs at positions 594 and 598. A C4-type zinc finger spans residues 718–740; the sequence is NCSHCKRPMSSRGWVCDRCHRCA. Zn(2+) is bound by residues C719, C722, C733, C736, C743, C746, C757, C760, H762, H765, H768, C779, C783, H785, and C787. The RING-type; atypical zinc finger occupies 741–790; it reads SMCAVCHHVVKGLFVWCQGCSHGGHLQHIMKWLEGSSHCPAGCGHLCEYS.

This sequence belongs to the WD repeat WDR24 family. As to quaternary structure, component of the GATOR2 subcomplex, composed of MIOS, SEC13, SEH1L, WDR24 and WDR59. The GATOR2 complex interacts with CASTOR1 and CASTOR2; the interaction is negatively regulated by arginine. The GATOR2 complex interacts with SESN1, SESN2 and SESN3; the interaction is negatively regulated by amino acids. SESN1, SESN2 and SESN3 convey leucine availability via direct interaction with SEH1L and WDR24. In terms of processing, phosphorylation at Ser-155 by AMPK in response to glucose deprivation inactivates WDR24 by promoting interaction with 14-3-3 proteins, such as YWHAG, preventing assembly of the GATOR2 complex. Autoubiquitinated; MIOS is required to prevent autoubiquitination.

The protein localises to the lysosome membrane. It carries out the reaction S-ubiquitinyl-[E2 ubiquitin-conjugating enzyme]-L-cysteine + [acceptor protein]-L-lysine = [E2 ubiquitin-conjugating enzyme]-L-cysteine + N(6)-ubiquitinyl-[acceptor protein]-L-lysine.. Its pathway is protein modification; protein ubiquitination. Its activity is regulated as follows. The GATOR2 complex is negatively regulated by the upstream amino acid sensors CASTOR1 and SESN2, which sequester the GATOR2 complex in absence of amino acids. In the presence of abundant amino acids, GATOR2 is released from CASTOR1 and SESN2 and activated. In terms of biological role, catalytic component of the GATOR2 complex, a multiprotein complex that acts as an activator of the amino acid-sensing branch of the mTORC1 signaling pathway. The GATOR2 complex indirectly activates mTORC1 through the inhibition of the GATOR1 subcomplex. GATOR2 probably acts as an E3 ubiquitin-protein ligase toward GATOR1. In the presence of abundant amino acids, the GATOR2 complex mediates ubiquitination of the NPRL2 core component of the GATOR1 complex, leading to GATOR1 inactivation. In the absence of amino acids, GATOR2 is inhibited, activating the GATOR1 complex. In addition to its role in regulation of the mTORC1 complex, promotes the acidification of lysosomes and facilitates autophagic flux. Within the GATOR2 complex, WDR24 constitutes the catalytic subunit that mediates 'Lys-6'-linked ubiquitination of NPRL2. This chain is GATOR2 complex protein WDR24, found in Homo sapiens (Human).